The following is a 442-amino-acid chain: Membrane sensor protein UhpC (442 aa).

Residues 1–30 are Cytoplasmic-facing; it reads MLSFLKAPANAPLITDKHEVDARYRYWRRH. Residues 31–51 traverse the membrane as a helical segment; it reads ILITIWLGYALFYFTRKSFNA. Topologically, residues 52 to 66 are periplasmic; that stretch reads AAPEILASGILTRSD. Residues 67-87 traverse the membrane as a helical segment; it reads IGLLATLFYITYGVSKFVSGI. At 88–95 the chain is on the cytoplasmic side; that stretch reads VSDRSNAR. The chain crosses the membrane as a helical span at residues 96–118; that stretch reads YFMGIGLIATGVVNILFGFSTSL. Residues 119–121 are Periplasmic-facing; that stretch reads WAF. The chain crosses the membrane as a helical span at residues 122-144; it reads ALLWALNAFFQGFGSPVCARLLT. Residues 145–162 are Cytoplasmic-facing; sequence AWYSRTERGGWWALWNTA. A helical membrane pass occupies residues 163-183; that stretch reads HNVGGALIPLVMAAVALHYGW. Position 184 (Arg184) is a topological domain, periplasmic. The helical transmembrane segment at 185–205 threads the bilayer; it reads VGMMVAGLLAIGVGMVLCWRL. The Cytoplasmic segment spans residues 206–244; the sequence is RDRPQAIGLPPVGDWRHDALEVAQQQEGAGLSRKEILAK. Residues 245-265 form a helical membrane-spanning segment; it reads YVLLNPYIWLLSLCYVLVYVV. At 266–289 the chain is on the periplasmic side; the sequence is RAAINDWGNLYMSETLGVDLVTAN. A helical membrane pass occupies residues 290-310; that stretch reads TAVSMFELGGFIGALVAGWGS. Over 311–322 the chain is Cytoplasmic; the sequence is DKLFNGNRGPMN. Residues 323–343 traverse the membrane as a helical segment; sequence LIFAAGILLSVGSLWLMPFAS. The Periplasmic segment spans residues 344–347; the sequence is YVMQ. A helical membrane pass occupies residues 348-368; the sequence is AACFFTTGFFVFGPQMLIGMA. The Cytoplasmic segment spans residues 369-379; the sequence is AAECSHKEAAG. The chain crosses the membrane as a helical span at residues 380–400; the sequence is AATGFVGLFAYLGASLSGWPL. At 401 to 410 the chain is on the periplasmic side; sequence AKVLEIWHWT. The helical transmembrane segment at 411 to 431 threads the bilayer; the sequence is GFFAVIAIAAGISALLLLPFL. Topologically, residues 432-442 are cytoplasmic; sequence NAQAPRETHEA.

It belongs to the major facilitator superfamily. Organophosphate:Pi antiporter (OPA) (TC 2.A.1.4) family.

The protein localises to the cell inner membrane. Its function is as follows. Part of the UhpABC signaling cascade that controls the expression of the hexose phosphate transporter UhpT. UhpC senses external glucose-6-phosphate and interacts with the histidine kinase UhpB, leading to the stimulation of the autokinase activity of UhpB. In Salmonella typhimurium (strain LT2 / SGSC1412 / ATCC 700720), this protein is Membrane sensor protein UhpC (uhpC).